The chain runs to 545 residues: Chaperonin GroEL (545 aa).

ATP contacts are provided by residues 30-33 (TLGP), K51, 87-91 (DGTTT), G415, and D495.

This sequence belongs to the chaperonin (HSP60) family. As to quaternary structure, forms a cylinder of 14 subunits composed of two heptameric rings stacked back-to-back. Interacts with the co-chaperonin GroES.

The protein localises to the cytoplasm. It carries out the reaction ATP + H2O + a folded polypeptide = ADP + phosphate + an unfolded polypeptide.. Together with its co-chaperonin GroES, plays an essential role in assisting protein folding. The GroEL-GroES system forms a nano-cage that allows encapsulation of the non-native substrate proteins and provides a physical environment optimized to promote and accelerate protein folding. In Yersinia pestis bv. Antiqua (strain Antiqua), this protein is Chaperonin GroEL.